The sequence spans 469 residues: Trigger factor (469 aa).

One can recognise a PPIase FKBP-type domain in the interval 162 to 243 (GDFVSIDLSA…VKSVKERELP (82 aa)). The disordered stretch occupies residues 438 to 469 (GPSGEQAAEDSAEESTDAAEGEAAEDADDTDK). Acidic residues predominate over residues 444 to 469 (AAEDSAEESTDAAEGEAAEDADDTDK).

This sequence belongs to the FKBP-type PPIase family. Tig subfamily.

Its subcellular location is the cytoplasm. It catalyses the reaction [protein]-peptidylproline (omega=180) = [protein]-peptidylproline (omega=0). Its function is as follows. Involved in protein export. Acts as a chaperone by maintaining the newly synthesized protein in an open conformation. Functions as a peptidyl-prolyl cis-trans isomerase. The polypeptide is Trigger factor (Mycolicibacterium smegmatis (strain ATCC 700084 / mc(2)155) (Mycobacterium smegmatis)).